The chain runs to 565 residues: Transcription factor asqA (565 aa).

Positions 204-273 (MDTAMAQAVR…HSMPALCIDS (70 aa)) are fungal transcription factor domain.

The protein resides in the nucleus. In terms of biological role, transcription factor that regulates specifically the 4'-methoxyviridicatin/aspoquinolone biosynthesis cluster. This chain is Transcription factor asqA, found in Emericella nidulans (strain FGSC A4 / ATCC 38163 / CBS 112.46 / NRRL 194 / M139) (Aspergillus nidulans).